We begin with the raw amino-acid sequence, 23 residues long: Pseudin-4 (23 aa).

In terms of tissue distribution, expressed by the skin glands.

Its subcellular location is the secreted. Possesses antifungal activity against C.albicans and is also active against E.coli and S.aureus. This is Pseudin-4 from Pseudis paradoxa (Paradoxical frog).